Reading from the N-terminus, the 505-residue chain is Retinoic acid receptor gamma (505 aa).

Disordered stretches follow at residues 1–57 (MMKF…SSKD) and 113–134 (SLSV…PSPP). Basic and acidic residues-rich tracts occupy residues 12-22 (DGGERPEEEGK) and 32-46 (MGKE…KEEA). Residues 52-142 (MSSSKDRICS…PPPPPRVYKP (91 aa)) are modulating. Over residues 115–124 (SVETQSTSSE) the composition is skewed to polar residues. 2 consecutive NR C4-type zinc fingers follow at residues 143-163 (CFVC…CEGC) and 179-203 (CHRD…LQKC). Positions 143–208 (CFVCNDKSSG…RLQKCFEVGM (66 aa)) form a DNA-binding region, nuclear receptor. The tract at residues 209 to 237 (SKEAVRNDRNKKKKEIKEEVVTDSYEMPP) is hinge. Residues 238–472 (EMEALIQKVS…PLIREMLENP (235 aa)) enclose the NR LBD domain. The segment at 462-505 (PPLIREMLENPEAFEDDASPPPKSEQKPIKVEEKPGEKTSTKDP) is disordered. Basic and acidic residues predominate over residues 485–505 (SEQKPIKVEEKPGEKTSTKDP).

It belongs to the nuclear hormone receptor family. NR1 subfamily. Heterodimer; with a RXR molecule. Binds DNA preferentially as a RAR/RXR heterodimer. In terms of tissue distribution, isoform Delta-1A and Isoform Delta-1B are most abundant in regenerating limbs, tails, and the anterior half of the lower jaw. Isoform Delta-2 is broadly and uniformly distributed.

It localises to the nucleus. Its function is as follows. Receptor for retinoic acid. Retinoic acid receptors bind as heterodimers to their target response elements in response to their ligands, all-trans or 9-cis retinoic acid, and regulate gene expression in various biological processes. The RAR/RXR heterodimers bind to the retinoic acid response elements (RARE) composed of tandem 5'-AGGTCA-3' sites known as DR1-DR5. This is Retinoic acid receptor gamma (RARG) from Notophthalmus viridescens (Eastern newt).